A 237-amino-acid chain; its full sequence is Octopine transport system permease protein OccQ (237 aa).

Residues 22–222 form the ABC transmembrane type-1 domain; the sequence is TAMTMAVAFS…LITFVSGQVF (201 aa). A run of 4 helical transmembrane segments spans residues 26–46, 72–92, 96–116, and 202–222; these read MAVA…GAAA, LVIY…ASLF, GFVG…VSGA, and SFYL…GQVF.

Belongs to the binding-protein-dependent transport system permease family. HisMQ subfamily.

Its subcellular location is the cell inner membrane. Functionally, component of the octopine active transport system probably consisting of four subunits: Q, M, P and T. This is Octopine transport system permease protein OccQ (occQ) from Agrobacterium tumefaciens (strain Ach5).